The sequence spans 509 residues: Maturase K (509 aa).

This sequence belongs to the intron maturase 2 family. MatK subfamily.

The protein localises to the plastid. Its subcellular location is the chloroplast. Its function is as follows. Usually encoded in the trnK tRNA gene intron. Probably assists in splicing its own and other chloroplast group II introns. The sequence is that of Maturase K from Vachellia farnesiana (Sweet acacia).